The primary structure comprises 110 residues: Hydrogenase maturation factor HypA (110 aa).

Residue histidine 2 participates in Ni(2+) binding. 4 residues coordinate Zn(2+): cysteine 70, cysteine 73, cysteine 86, and cysteine 89.

It belongs to the HypA/HybF family.

Involved in the maturation of [NiFe] hydrogenases. Required for nickel insertion into the metal center of the hydrogenase. This Geobacter sp. (strain M21) protein is Hydrogenase maturation factor HypA.